The chain runs to 444 residues: Methylenetetrahydrofolate--tRNA-(uracil-5-)-methyltransferase TrmFO (444 aa).

FAD is bound at residue 9–14; sequence GAGMAG.

This sequence belongs to the MnmG family. TrmFO subfamily. FAD serves as cofactor.

The protein localises to the cytoplasm. The enzyme catalyses uridine(54) in tRNA + (6R)-5,10-methylene-5,6,7,8-tetrahydrofolate + NADH + H(+) = 5-methyluridine(54) in tRNA + (6S)-5,6,7,8-tetrahydrofolate + NAD(+). The catalysed reaction is uridine(54) in tRNA + (6R)-5,10-methylene-5,6,7,8-tetrahydrofolate + NADPH + H(+) = 5-methyluridine(54) in tRNA + (6S)-5,6,7,8-tetrahydrofolate + NADP(+). Catalyzes the folate-dependent formation of 5-methyl-uridine at position 54 (M-5-U54) in all tRNAs. The protein is Methylenetetrahydrofolate--tRNA-(uracil-5-)-methyltransferase TrmFO of Cereibacter sphaeroides (strain ATCC 17029 / ATH 2.4.9) (Rhodobacter sphaeroides).